A 131-amino-acid polypeptide reads, in one-letter code: Profilin-8 (131 aa).

Cys13 and Cys115 are joined by a disulfide. The Involved in PIP2 interaction signature appears at 81-97 (AVIRGKKGSGGITVKKT). Thr111 is subject to Phosphothreonine.

Belongs to the profilin family. As to quaternary structure, occurs in many kinds of cells as a complex with monomeric actin in a 1:1 ratio. In terms of processing, phosphorylated by MAP kinases.

The protein resides in the cytoplasm. It is found in the cytoskeleton. In terms of biological role, binds to actin and affects the structure of the cytoskeleton. At high concentrations, profilin prevents the polymerization of actin, whereas it enhances it at low concentrations. In Zea mays (Maize), this protein is Profilin-8.